The primary structure comprises 328 residues: Delta(3,5)-Delta(2,4)-dienoyl-CoA isomerase, mitochondrial (328 aa).

A mitochondrion-targeting transit peptide spans 1-33; that stretch reads MAAGIVASRRLRDLLTRRLTGSNYPGLSISLRL. Substrate-binding positions include 116 to 120 and Gly-174; that span reads AGIDL. Position 231 is an N6-succinyllysine (Lys-231). Ser-268 is subject to Phosphoserine. A Microbody targeting signal motif is present at residues 326–328; it reads SKL. Lys-327 carries the N6-acetyllysine modification.

It belongs to the enoyl-CoA hydratase/isomerase family. As to quaternary structure, homohexamer.

Its subcellular location is the mitochondrion. The protein resides in the peroxisome. It carries out the reaction (3E,5Z)-octadienoyl-CoA = (2E,4E)-octadienoyl-CoA. The enzyme catalyses (3E,5Z,8Z,11Z,14Z)-eicosapentaenoyl-CoA = (2E,4E,8Z,11Z,14Z)-eicosapentaenoyl-CoA. The protein operates within lipid metabolism; fatty acid beta-oxidation. Functionally, isomerization of 3-trans,5-cis-dienoyl-CoA to 2-trans,4-trans-dienoyl-CoA. The sequence is that of Delta(3,5)-Delta(2,4)-dienoyl-CoA isomerase, mitochondrial from Homo sapiens (Human).